A 378-amino-acid chain; its full sequence is Stimulator of interferon genes protein (378 aa).

Transmembrane regions (helical) follow at residues 21 to 41 (AAFVLLSTCLAALWELGEPAD) and 46 to 66 (WLVLHLASEQLGLLFKGLCSL). Residues C88 and C91 are each lipidated (S-palmitoyl cysteine). 2 helical membrane passes run 89 to 109 (LGCPIRCGVLLLLSCYCYTFL) and 114 to 134 (GLPFAWIVALLGLSQALNILL). The cyclic dinucleotide-binding domain (CBD) stretch occupies residues 153-339 (FNVAHGLAWS…KHLKQEEKEE (187 aa)). S162, Y167, R238, and T263 together coordinate 2',3'-cGAMP. 3',3'-c-di-GMP contacts are provided by residues S162, Y167, 238-241 (RVYT), and T263. Y167, R238, and T263 together coordinate 2',3'-cUAMP. Residues 339 to 378 (EVTVGTMGSSGVLESSTLDKEPQLLISGMDQPLPLRTDVF) are C-terminal tail (CTT). A Phosphoserine modification is found at S354. At T355 the chain carries Phosphothreonine. Positions 362–365 (LLIS) match the pLxIS motif motif. S365 carries the post-translational modification Phosphoserine; by TBK1.

It belongs to the STING family. As to quaternary structure, homodimer; forms a homodimer in absence of cyclic nucleotide (c-di-GMP or cGAMP). Homotetramer; in presence of cyclic nucleotide (c-di-GMP or cGAMP), forms tetramers and higher-order oligomers through side-by-side packing. Interacts (when phosphorylated) with IRF3; following activation and phosphorylation on the pLxIS motif by TBK1, recruits IRF3. Interacts with TBK1; when homodimer, leading to subsequent production of IFN-beta. In terms of processing, phosphorylation by TBK1 leads to activation and production of IFN-beta. Following cyclic nucleotide (c-di-GMP or cGAMP)-binding, activation and translocation from the endoplasmic reticulum, STING1 is phosphorylated by TBK1 at Ser-365 in the pLxIS motif. The phosphorylated pLxIS motif constitutes an IRF3-binding motif, leading to recruitment of the transcription factor IRF3 to induce type-I interferons and other cytokines. In contrast, lacks phosphorylation site at position 357, leading to reduced production of type-I interferons and other cytokines.

The protein localises to the endoplasmic reticulum membrane. Its subcellular location is the cytoplasm. It localises to the perinuclear region. The protein resides in the endoplasmic reticulum-Golgi intermediate compartment membrane. It is found in the golgi apparatus membrane. The protein localises to the cytoplasmic vesicle. Its subcellular location is the autophagosome membrane. It localises to the mitochondrion outer membrane. The protein resides in the cell membrane. The catalysed reaction is H(+)(in) = H(+)(out). Functionally, facilitator of innate immune signaling that acts as a sensor of cytosolic DNA from bacteria and viruses and promotes low production of type I interferon (IFN-alpha and IFN-beta). Compared to other mammals, STING1-dependent type I interferon induction is strongly reduced in bats, suggesting that the cGAS-STING pathway promotes a limited inflammatory response. Innate immune response is triggered in response to non-CpG double-stranded DNA from viruses and bacteria delivered to the cytoplasm. Acts by binding cyclic dinucleotides: recognizes and binds cyclic di-GMP (c-di-GMP), a second messenger produced by bacteria, cyclic UMP-AMP (2',3'-cUAMP), and cyclic GMP-AMP (cGAMP), a messenger produced by CGAS in response to DNA virus in the cytosol. Upon binding to c-di-GMP, cUAMP or cGAMP, STING1 oligomerizes, translocates from the endoplasmic reticulum and is phosphorylated by TBK1 on the pLxIS motif, leading to recruitment and subsequent activation of the transcription factor IRF3 to induce expression of type I interferon and exert a potent anti-viral state. In addition to promote the production of type I interferons, plays a direct role in autophagy. Following cGAMP-binding, STING1 buds from the endoplasmic reticulum into COPII vesicles, which then form the endoplasmic reticulum-Golgi intermediate compartment (ERGIC). The ERGIC serves as the membrane source for WIPI2 recruitment and LC3 lipidation, leading to formation of autophagosomes that target cytosolic DNA or DNA viruses for degradation by the lysosome. Promotes autophagy by acting as a proton channel that directs proton efflux from the Golgi to facilitate MAP1LC3B/LC3B lipidation. The autophagy- and interferon-inducing activities can be uncoupled and autophagy induction is independent of TBK1 phosphorylation. This Rhinolophus ferrumequinum (Greater horseshoe bat) protein is Stimulator of interferon genes protein.